A 415-amino-acid polypeptide reads, in one-letter code: WD repeat and FYVE domain-containing protein 2 (415 aa).

WD repeat units lie at residues 71-103 (HHFM…YEFS), 119-148 (CHAG…IVWH), 202-232 (AHTN…IMWD), and 245-284 (GHNG…VETP). The FYVE-type zinc-finger motif lies at 286–357 (WKTSDCCQKC…ICNDCNARMK (72 aa)). Positions 292, 295, 319, 322, 327, 330, 349, and 352 each coordinate Zn(2+). Residues 373 to 403 (EIHTGITAMHLQETLGLLVTSGQNRVIMIWD) form a WD 5 repeat.

Plays a role in coelomocyte endocytosis. The chain is WD repeat and FYVE domain-containing protein 2 (wdfy-2) from Caenorhabditis elegans.